The chain runs to 494 residues: PTS system cellobiose-specific EIIC component (494 aa).

One can recognise a PTS EIIC type-3 domain in the interval 8–481 (MEKYLVPVAA…IITFVIWVPF (474 aa)). The next 9 membrane-spanning stretches (helical) occupy residues 32–52 (FIGM…SAIV), 92–112 (ISAL…AFSW), 119–139 (AYGV…FAGL), 188–208 (AYFT…KLML), 227–247 (FLAI…YYII), 274–294 (IFSV…GLHG), 355–375 (AFAW…IILF), 406–426 (VVLN…SVII), and 463–483 (AIVL…PFVI).

It localises to the cell membrane. The phosphoenolpyruvate-dependent sugar phosphotransferase system (PTS), a major carbohydrate active transport system, catalyzes the phosphorylation of incoming sugar substrates concomitant with their translocation across the cell membrane. Involved in cellobiose transport with PtcA and PtcB. This system can also transport lactose. This chain is PTS system cellobiose-specific EIIC component, found in Lactococcus lactis subsp. lactis (strain IL1403) (Streptococcus lactis).